The chain runs to 228 residues: Large ribosomal subunit protein bL25 (228 aa).

Polar residues predominate over residues 1–10; the sequence is MNSLDANTRN. Disordered regions lie at residues 1-20 and 187-228; these read MNSLDANTRNTKSKGDVRSL and MKEP…EEKK. Over residues 202 to 228 the composition is skewed to basic and acidic residues; sequence EDGKEAAPAAEGDKKDDGEKKATEEKK.

Belongs to the bacterial ribosomal protein bL25 family. CTC subfamily. In terms of assembly, part of the 50S ribosomal subunit; part of the 5S rRNA/L5/L18/L25 subcomplex. Contacts the 5S rRNA. Binds to the 5S rRNA independently of L5 and L18.

Functionally, this is one of the proteins that binds to the 5S RNA in the ribosome where it forms part of the central protuberance. The sequence is that of Large ribosomal subunit protein bL25 from Pelagibacter ubique (strain HTCC1062).